Here is a 61-residue protein sequence, read N- to C-terminus: Small ribosomal subunit protein uS14 (61 aa).

Positions 24, 27, 40, and 43 each coordinate Zn(2+).

The protein belongs to the universal ribosomal protein uS14 family. Zinc-binding uS14 subfamily. As to quaternary structure, part of the 30S ribosomal subunit. Contacts proteins S3 and S10. Requires Zn(2+) as cofactor.

In terms of biological role, binds 16S rRNA, required for the assembly of 30S particles and may also be responsible for determining the conformation of the 16S rRNA at the A site. This Macrococcus caseolyticus (strain JCSC5402) (Macrococcoides caseolyticum) protein is Small ribosomal subunit protein uS14.